A 341-amino-acid polypeptide reads, in one-letter code: Anthranilate phosphoribosyltransferase (341 aa).

5-phospho-alpha-D-ribose 1-diphosphate contacts are provided by residues G79, 82–83 (GD), T87, 89–92 (NIST), 107–115 (KHGNRAASS), and A119. G79 contributes to the anthranilate binding site. Mg(2+) is bound at residue S91. N110 contacts anthranilate. R165 is a binding site for anthranilate. The Mg(2+) site is built by D224 and E225.

Belongs to the anthranilate phosphoribosyltransferase family. Homodimer. Mg(2+) is required as a cofactor.

It carries out the reaction N-(5-phospho-beta-D-ribosyl)anthranilate + diphosphate = 5-phospho-alpha-D-ribose 1-diphosphate + anthranilate. It functions in the pathway amino-acid biosynthesis; L-tryptophan biosynthesis; L-tryptophan from chorismate: step 2/5. In terms of biological role, catalyzes the transfer of the phosphoribosyl group of 5-phosphorylribose-1-pyrophosphate (PRPP) to anthranilate to yield N-(5'-phosphoribosyl)-anthranilate (PRA). This is Anthranilate phosphoribosyltransferase from Lacticaseibacillus paracasei (strain ATCC 334 / BCRC 17002 / CCUG 31169 / CIP 107868 / KCTC 3260 / NRRL B-441) (Lactobacillus paracasei).